Here is a 179-residue protein sequence, read N- to C-terminus: Large ribosomal subunit protein uL5 (179 aa).

This sequence belongs to the universal ribosomal protein uL5 family. Part of the 50S ribosomal subunit; part of the 5S rRNA/L5/L18/L25 subcomplex. Contacts the 5S rRNA and the P site tRNA. Forms a bridge to the 30S subunit in the 70S ribosome.

This is one of the proteins that bind and probably mediate the attachment of the 5S RNA into the large ribosomal subunit, where it forms part of the central protuberance. In the 70S ribosome it contacts protein S13 of the 30S subunit (bridge B1b), connecting the 2 subunits; this bridge is implicated in subunit movement. Contacts the P site tRNA; the 5S rRNA and some of its associated proteins might help stabilize positioning of ribosome-bound tRNAs. The protein is Large ribosomal subunit protein uL5 of Burkholderia mallei (strain NCTC 10247).